Here is a 211-residue protein sequence, read N- to C-terminus: Protein FAM167A (211 aa).

Disordered stretches follow at residues 1-30 (MSVP…DHLR) and 56-108 (EEQT…GKLE). A coiled-coil region spans residues 120 to 153 (LRKELMEMRLQDQQLARQLMRLRSDIHKLKIEQT).

This sequence belongs to the FAM167 (SEC) family.

The protein is Protein FAM167A (FAM167A) of Bos taurus (Bovine).